The sequence spans 440 residues: Gap junction gamma-2 protein (440 aa).

Residues 1 to 21 (MTNMSWSFLTRLLEEIHNHST) lie on the Cytoplasmic side of the membrane. The helical transmembrane segment at 22 to 42 (FVGKVWLTVLVVFRIVLTAVG) threads the bilayer. The Extracellular segment spans residues 43–78 (GESIYSDEQSKFTCNTRQPGCDNVCYDAFAPLSHVR). The helical transmembrane segment at 79–99 (FWVFQIVVISTPSVMYLGYAV) threads the bilayer. Residues 100–223 (HRLARASEQE…AQLVVRAAFE (124 aa)) lie on the Cytoplasmic side of the membrane. A disordered region spans residues 108-199 (QERRRALRRR…TPGPAGQHDG (92 aa)). Residues 112 to 124 (RALRRRPGPRRLP) show a composition bias toward basic residues. The span at 150–173 (LEEDEDEEPGAPEGPGEDTEEERT) shows a compositional bias: acidic residues. A helical transmembrane segment spans residues 224-244 (VAFLVGQYLLYGFEVPPFFAC). Topologically, residues 245–264 (SRQPCPHVVDCFVSRPTEKT) are extracellular. Residues 265–285 (VFLLVMYVVSCLCLLLNLCEM) form a helical membrane-spanning segment. At 286 to 440 (AHLGLGSAQD…SRDGKATVWI (155 aa)) the chain is on the cytoplasmic side. The interval 368-440 (ADRDSPPCSG…SRDGKATVWI (73 aa)) is disordered. A Phosphoserine modification is found at Ser-372. Residues 380-401 (ATSRGPPRAGGPASGTGSATSG) are compositionally biased toward low complexity.

This sequence belongs to the connexin family. Gamma-type subfamily. In terms of assembly, a connexon is composed of a hexamer of connexins. Interacts with TJP1. As to expression, mainly expressed by oligodendrocytes in the central nervous system. Expressed in optic nerve (at protein level).

Its subcellular location is the cell membrane. It localises to the cell junction. The protein resides in the gap junction. In terms of biological role, one gap junction consists of a cluster of closely packed pairs of transmembrane channels, the connexons, through which materials of low MW diffuse from one cell to a neighboring cell. May play a role in myelination in central and peripheral nervous systems. The sequence is that of Gap junction gamma-2 protein (Gjc2) from Rattus norvegicus (Rat).